A 306-amino-acid chain; its full sequence is Type 2A encapsulin shell protein SrpI (306 aa).

It belongs to the encapsulin family. Family 2A subfamily. In terms of assembly, the 24.5 nm encapsulin nanocompartment is formed by 60 subunits; monomers form pentamers which assemble to form shells. There are 12 positively charged pores where the pentamers meet with a minimal pore diameter of 3.7 Angstroms as well 3-fold axis channels and dimer channels.

Its subcellular location is the encapsulin nanocompartment. Shell component of a type 2A encapsulin nanocompartment. Expression in E.coli generates nanocompartments with an average diameter of 25 nm. They can be disassembled by treatment with 6M guanidine hydrochloride and reassembled with cargo. The nanocompartment is probably involved in sulfur metabolism. Probably allows passage of cysteine into its interior; during growth in light the physiological pH is 8-8.4, about 30-54% of free cysteine (charge -1) would be able to pass through the shell. The protein is Type 2A encapsulin shell protein SrpI of Synechococcus elongatus (strain ATCC 33912 / PCC 7942 / FACHB-805) (Anacystis nidulans R2).